The chain runs to 546 residues: Chaperonin GroEL 4 (546 aa).

Residues Thr-30–Pro-33, Lys-51, Asp-87–Thr-91, Gly-415, and Asp-495 each bind ATP. A disordered region spans residues Ala-524–Phe-546. Residues Gln-533–Phe-546 are compositionally biased toward gly residues.

Belongs to the chaperonin (HSP60) family. Forms a cylinder of 14 subunits composed of two heptameric rings stacked back-to-back. Interacts with the co-chaperonin GroES.

Its subcellular location is the cytoplasm. The enzyme catalyses ATP + H2O + a folded polypeptide = ADP + phosphate + an unfolded polypeptide.. Functionally, together with its co-chaperonin GroES, plays an essential role in assisting protein folding. The GroEL-GroES system forms a nano-cage that allows encapsulation of the non-native substrate proteins and provides a physical environment optimized to promote and accelerate protein folding. The protein is Chaperonin GroEL 4 of Paraburkholderia xenovorans (strain LB400).